A 266-amino-acid polypeptide reads, in one-letter code: Putative pyruvate, phosphate dikinase regulatory protein (266 aa).

149–156 (GVSRTSKT) contributes to the ADP binding site.

This sequence belongs to the pyruvate, phosphate/water dikinase regulatory protein family. PDRP subfamily.

It catalyses the reaction N(tele)-phospho-L-histidyl/L-threonyl-[pyruvate, phosphate dikinase] + ADP = N(tele)-phospho-L-histidyl/O-phospho-L-threonyl-[pyruvate, phosphate dikinase] + AMP + H(+). The enzyme catalyses N(tele)-phospho-L-histidyl/O-phospho-L-threonyl-[pyruvate, phosphate dikinase] + phosphate + H(+) = N(tele)-phospho-L-histidyl/L-threonyl-[pyruvate, phosphate dikinase] + diphosphate. Functionally, bifunctional serine/threonine kinase and phosphorylase involved in the regulation of the pyruvate, phosphate dikinase (PPDK) by catalyzing its phosphorylation/dephosphorylation. The protein is Putative pyruvate, phosphate dikinase regulatory protein of Geobacillus thermodenitrificans (strain NG80-2).